Here is a 446-residue protein sequence, read N- to C-terminus: MSSSVWQERRHGEDKQRRNDHRSPFQRDRARILHSAAFRRLQAKTQVLGVGMNDFYRTRLTHSLEVSQIGTGIAAQLSRKYPEHKPLLGSMSLLESLCLAHDIGHPPFGHGGEVALNYMMRHHGGFEGNGQTFRILSKLEPYTEAFGMNLCRRTMLGILKYPASQSLLFVAGSHPEITNHRQLKPSQWPPVKGIFDDDSDIFDWVLEPLSVADRARFTSVQPSLQPNYPHLRTQFKSFDCSIMELADDIAYAVHDLEDAIVMGIVTASQWQQDVAPTLKHSGDPWIRQELADIGTKLFSHEHHLRKDAIGTLVNGFVTAIIINDDPAFEEPLLRFNASLEPEFANALNVLKQLVFKYVIRKPEIQMLEYKGQQIVMGLFEAFASDPERLLPLNTQERWRTSEQQGQNSHRVLADYISGMTDEFAGRLYQQLFSPKAGSNVELSKEM.

The segment at 1 to 28 (MSSSVWQERRHGEDKQRRNDHRSPFQRD) is disordered. Residues 7-28 (QERRHGEDKQRRNDHRSPFQRD) are compositionally biased toward basic and acidic residues. The region spanning 59–252 (RLTHSLEVSQ…MELADDIAYA (194 aa)) is the HD domain.

Belongs to the dGTPase family. Type 2 subfamily.

In Shewanella sp. (strain ANA-3), this protein is Deoxyguanosinetriphosphate triphosphohydrolase-like protein.